The primary structure comprises 360 residues: Glutaminyl-peptide cyclotransferase (360 aa).

Positions 1–23 (MKYLKILIIVTIFFFLLINVINC) are cleaved as a signal peptide. A glycan (N-linked (GlcNAc...) asparagine) is linked at asparagine 135. A Zn(2+)-binding site is contributed by aspartate 165. Glutamate 199 acts as the Proton acceptor in catalysis. Glutamate 200 contributes to the Zn(2+) binding site. Aspartate 251 serves as the catalytic Proton acceptor. Histidine 330 lines the Zn(2+) pocket.

This sequence belongs to the glutaminyl-peptide cyclotransferase family.

The protein localises to the secreted. It carries out the reaction N-terminal L-glutaminyl-[peptide] = N-terminal 5-oxo-L-prolyl-[peptide] + NH4(+). Its function is as follows. Responsible for the biosynthesis of pyroglutamyl peptides. Has a bias against acidic and tryptophan residues adjacent to the N-terminal glutaminyl residue and a lack of importance of chain length after the second residue. Also catalyzes N-terminal pyroglutamate formation. The polypeptide is Glutaminyl-peptide cyclotransferase (qpct) (Dictyostelium discoideum (Social amoeba)).